The sequence spans 184 residues: Ras-related protein Rap-1A (184 aa).

GTP-binding positions include 10–18 (GSGGVGKSA), 29–35 (VEKYDPT), Gly-60, and 116–119 (NKCD). An Effector region motif is present at residues 32-40 (YDPTIEDSY). Position 181 is a cysteine methyl ester (Cys-181). Cys-181 carries the S-geranylgeranyl cysteine lipid modification. A propeptide spans 182 to 184 (LLL) (removed in mature form).

This sequence belongs to the small GTPase superfamily. Ras family. As to quaternary structure, found in a complex, at least composed of ITGB1BP1, KRIT1 and RAP1A. Interacts (active GTP-bound form preferentially) with KRIT1 (via C-terminus FERM domain); the interaction does not induce the opening conformation of KRIT1. Found in a complex composed of CDH1, RAP1A and PKP3; PKP3 acts as a scaffold protein within the complex, the complex is required for CDH1 localization to mature desmosome cell junctions. In its GTP-bound form interacts with PLCE1 and RADIL. Interacts with SGSM1, SGSM2 and SGSM3. Interacts (via GTP-bound active form) with RAPGEF2 (via Ras-associating domain). Interacts with TBC1D21. Interacts with RAP1GDS1.

The protein resides in the cell membrane. It is found in the cytoplasm. Its subcellular location is the perinuclear region. The protein localises to the cell junction. It localises to the early endosome. It catalyses the reaction GTP + H2O = GDP + phosphate + H(+). Its activity is regulated as follows. Activated by guanine nucleotide-exchange factors (GEF) EPAC and EPAC2 in a cAMP-dependent manner, and GFR. Its function is as follows. Counteracts the mitogenic function of Ras, at least partly because it can interact with Ras GAPs and RAF in a competitive manner. Together with ITGB1BP1, regulates KRIT1 localization to microtubules and membranes. Plays a role in nerve growth factor (NGF)-induced neurite outgrowth. Plays a role in the regulation of embryonic blood vessel formation. Involved in the establishment of basal endothelial barrier function. Facilitates the progressive accumulation of CDH1 at mature desmosome junctions via cAMP-dependent signaling and its interaction with PKP3. May be involved in the regulation of the vascular endothelial growth factor receptor KDR expression at endothelial cell-cell junctions. In Bos taurus (Bovine), this protein is Ras-related protein Rap-1A (RAP1A).